The following is a 161-amino-acid chain: MSLLRVTRSSGHLSAVCRLPARSISTTSILLVPSNEGNKPPTPMIDLEDKSLPIPIYKEKKNEPLQLQKSRLLYQSRKRGMLENGLLLSTFAAKHLESMDVKQTKLYDQLINMPTNDWDIFYWATGVKPTPAEYDNEIMALLKDHVKNANREKRICQPNLY.

The N-terminal 31 residues, 1–31 (MSLLRVTRSSGHLSAVCRLPARSISTTSILL), are a transit peptide targeting the mitochondrion.

Belongs to the SDHAF2 family. In terms of assembly, interacts with the flavoprotein subunit within the SDH catalytic dimer.

It is found in the mitochondrion matrix. Functionally, plays an essential role in the assembly of succinate dehydrogenase (SDH), an enzyme complex (also referred to as respiratory complex II) that is a component of both the tricarboxylic acid (TCA) cycle and the mitochondrial electron transport chain, and which couples the oxidation of succinate to fumarate with the reduction of ubiquinone (coenzyme Q) to ubiquinol. Required for flavinylation (covalent attachment of FAD) of the flavoprotein subunit of the SDH catalytic dimer. This is Succinate dehydrogenase assembly factor 2, mitochondrial from Aedes aegypti (Yellowfever mosquito).